Here is a 263-residue protein sequence, read N- to C-terminus: uncharacterized protein (263 aa).

An ATP-binding site is contributed by 12–19 (KGGVGKTT).

Belongs to the ParA family. MinD subfamily.

This is an uncharacterized protein from Methanocaldococcus jannaschii (strain ATCC 43067 / DSM 2661 / JAL-1 / JCM 10045 / NBRC 100440) (Methanococcus jannaschii).